The primary structure comprises 667 residues: DNA ligase (667 aa).

NAD(+) contacts are provided by residues 34–38 (DSEYD), 83–84 (SL), and E112. Catalysis depends on K114, which acts as the N6-AMP-lysine intermediate. NAD(+) contacts are provided by R135, E169, K285, and K309. Zn(2+)-binding residues include C403, C406, C421, and C426. Positions 589–667 (ASDSYFAGKT…EARLISELKK (79 aa)) constitute a BRCT domain.

The protein belongs to the NAD-dependent DNA ligase family. LigA subfamily. It depends on Mg(2+) as a cofactor. Requires Mn(2+) as cofactor.

The enzyme catalyses NAD(+) + (deoxyribonucleotide)n-3'-hydroxyl + 5'-phospho-(deoxyribonucleotide)m = (deoxyribonucleotide)n+m + AMP + beta-nicotinamide D-nucleotide.. In terms of biological role, DNA ligase that catalyzes the formation of phosphodiester linkages between 5'-phosphoryl and 3'-hydroxyl groups in double-stranded DNA using NAD as a coenzyme and as the energy source for the reaction. It is essential for DNA replication and repair of damaged DNA. In Bacillus licheniformis (strain ATCC 14580 / DSM 13 / JCM 2505 / CCUG 7422 / NBRC 12200 / NCIMB 9375 / NCTC 10341 / NRRL NRS-1264 / Gibson 46), this protein is DNA ligase.